Reading from the N-terminus, the 581-residue chain is Prolactin receptor (581 aa).

The signal sequence occupies residues 1–24; it reads MKENAASRVLFILLLFLFASLLNG. The Extracellular portion of the chain corresponds to 25–237; sequence QSPPEKPKLI…NDFPVKDTSM (213 aa). Fibronectin type-III domains are found at residues 27 to 127 and 129 to 229; these read PPEK…IVEP and PPVN…IPND. The cysteines at positions 36 and 46 are disulfide-linked. Asn-59 carries an N-linked (GlcNAc...) asparagine glycan. Cysteines 75 and 86 form a disulfide. N-linked (GlcNAc...) asparagine glycosylation is present at Asn-132. Residues Asp-211 and His-212 each contribute to the Zn(2+) site. The WSXWS motif motif lies at 215-219; the sequence is WSEWS. A helical transmembrane segment spans residues 238-258; the sequence is WIFVGVLSAVICLIMVWAVAL. The Cytoplasmic portion of the chain corresponds to 259-581; sequence KGYSMVTCIL…SAKKAPPALP (323 aa). The Box 1 motif signature appears at 267–275; it reads ILPPVPGPK. Basic and acidic residues-rich tracts occupy residues 323-349 and 375-388; these read QHLM…DTDS and HIPE…DPET. Disordered regions lie at residues 323-388 and 462-492; these read QHLM…DPET and FKPS…PDQD.

The protein belongs to the type I cytokine receptor family. Type 1 subfamily. In terms of assembly, interacts with SMARCA1. Interacts with NEK3 and VAV2 and this interaction is prolactin-dependent. In terms of tissue distribution, expressed in all tissues examined; liver, pituitary, adrenal gland, ovary and fetal liver.

The protein localises to the membrane. Functionally, this is a receptor for the anterior pituitary hormone prolactin. The polypeptide is Prolactin receptor (PRLR) (Ovis aries (Sheep)).